Reading from the N-terminus, the 200-residue chain is Glutathione peroxidase 1 (200 aa).

Ser31 bears the Phosphoserine mark. Residue Sec46 is part of the active site. A non-standard amino acid (selenocysteine) is located at residue Sec46. N6-acetyllysine; alternate is present on residues Lys85 and Lys111. Lys85 and Lys111 each carry N6-succinyllysine; alternate. Lys118 carries the N6-acetyllysine modification. Lys145 carries the post-translational modification N6-acetyllysine; alternate. Lys145 is modified (N6-succinyllysine; alternate). Position 194 is a phosphoserine (Ser194).

Belongs to the glutathione peroxidase family. As to quaternary structure, homotetramer. Interacts with MIEN1. In terms of processing, during periods of oxidative stress, Sec-46 may react with a superoxide radical, irreversibly lose hydroselenide and be converted to dehydroalanine.

The protein localises to the cytoplasm. The protein resides in the mitochondrion. It catalyses the reaction 2 glutathione + H2O2 = glutathione disulfide + 2 H2O. The enzyme catalyses a hydroperoxy polyunsaturated fatty acid + 2 glutathione = a hydroxy polyunsaturated fatty acid + glutathione disulfide + H2O. The catalysed reaction is tert-butyl hydroperoxide + 2 glutathione = tert-butanol + glutathione disulfide + H2O. It carries out the reaction cumene hydroperoxide + 2 glutathione = 2-phenylpropan-2-ol + glutathione disulfide + H2O. It catalyses the reaction (13S)-hydroperoxy-(9Z,11E)-octadecadienoate + 2 glutathione = (13S)-hydroxy-(9Z,11E)-octadecadienoate + glutathione disulfide + H2O. The enzyme catalyses (9S)-hydroperoxy-(10E,12Z)-octadecadienoate + 2 glutathione = (9S)-hydroxy-(10E,12Z)-octadecadienoate + glutathione disulfide + H2O. The catalysed reaction is (5S)-hydroperoxy-(6E,8Z,11Z,14Z)-eicosatetraenoate + 2 glutathione = (5S)-hydroxy-(6E,8Z,11Z,14Z)-eicosatetraenoate + glutathione disulfide + H2O. It carries out the reaction (12S)-hydroperoxy-(5Z,8Z,10E,14Z)-eicosatetraenoate + 2 glutathione = (12S)-hydroxy-(5Z,8Z,10E,14Z)-eicosatetraenoate + glutathione disulfide + H2O. It catalyses the reaction (12R)-hydroperoxy-(5Z,8Z,10E,14Z)-eicosatetraenoate + 2 glutathione = (12R)-hydroxy-(5Z,8Z,10E,14Z)-eicosatetraenoate + glutathione disulfide + H2O. The enzyme catalyses (15S)-hydroperoxy-(5Z,8Z,11Z,13E)-eicosatetraenoate + 2 glutathione = (15S)-hydroxy-(5Z,8Z,11Z,13E)-eicosatetraenoate + glutathione disulfide + H2O. The catalysed reaction is (5S)-hydroperoxy-(6E,8Z,11Z,14Z,17Z)-eicosapentaenoate + 2 glutathione = (5S)-hydroxy-(6E,8Z,11Z,14Z,17Z)-eicosapentaenoate + glutathione disulfide + H2O. It carries out the reaction (12S)-hydroperoxy-(5Z,8Z,10E,14Z,17Z)-eicosapentaenoate + 2 glutathione = (12S)-hydroxy-(5Z,8Z,10E,14Z,17Z)-eicosapentaenoate + glutathione disulfide + H2O. It catalyses the reaction (15S)-hydroperoxy-(5Z,8Z,11Z,13E,17Z)-eicosapentaenoate + 2 glutathione = (15S)-hydroxy-(5Z,8Z,11Z,13E,17Z)-eicosapentaenoate + glutathione disulfide + H2O. The enzyme catalyses (15S)-hydroperoxy-(11Z,13E)-eicosadienoate + 2 glutathione = (15S)-hydroxy-(11Z,13E)-eicosadienoate + glutathione disulfide + H2O. The catalysed reaction is (17S)-hydroperoxy-(4Z,7Z,10Z,13Z,15E,19Z)-docosahexaenoate + 2 glutathione = (17S)-hydroxy-(4Z,7Z,10Z,13Z,15E,19Z)-docosahexaenoate + glutathione disulfide + H2O. Its function is as follows. Catalyzes the reduction of hydroperoxides in a glutathione-dependent manner thus regulating cellular redox homeostasis. Can reduce small soluble hydroperoxides such as H2O2, cumene hydroperoxide and tert-butyl hydroperoxide, as well as several fatty acid-derived hydroperoxides. In platelets catalyzes the reduction of 12-hydroperoxyeicosatetraenoic acid, the primary product of the arachidonate 12-lipoxygenase pathway. This is Glutathione peroxidase 1 (GPX1) from Oryctolagus cuniculus (Rabbit).